The following is a 688-amino-acid chain: DNA ligase (688 aa).

Residues 51–55, 100–101, and Glu129 contribute to the NAD(+) site; these read DSEYD and SL. Residue Lys131 is the N6-AMP-lysine intermediate of the active site. Arg152, Glu189, Lys308, and Lys332 together coordinate NAD(+). Zn(2+) contacts are provided by Cys426, Cys429, Cys444, and Cys450. The region spanning 609–688 is the BRCT domain; the sequence is ADEQPLKGQT…DELLALLANS (80 aa).

Belongs to the NAD-dependent DNA ligase family. LigA subfamily. Requires Mg(2+) as cofactor. Mn(2+) serves as cofactor.

The catalysed reaction is NAD(+) + (deoxyribonucleotide)n-3'-hydroxyl + 5'-phospho-(deoxyribonucleotide)m = (deoxyribonucleotide)n+m + AMP + beta-nicotinamide D-nucleotide.. Its function is as follows. DNA ligase that catalyzes the formation of phosphodiester linkages between 5'-phosphoryl and 3'-hydroxyl groups in double-stranded DNA using NAD as a coenzyme and as the energy source for the reaction. It is essential for DNA replication and repair of damaged DNA. The polypeptide is DNA ligase (Shewanella sp. (strain MR-7)).